Consider the following 788-residue polypeptide: Protein TRS1 (788 aa).

Disordered regions lie at residues 1–82 (MAQR…NFWH) and 610–663 (IHKK…PSRV). Over residues 16–25 (RGRGAGGPSG) the composition is skewed to gly residues. Low complexity predominate over residues 26–56 (VGSSPPSSCVPMGATSTAGTGASAAPTATPG). The interval 74 to 248 (SGNNSNFWHG…HGAGEVVRLY (175 aa)) is RNA-binding. Residues 651 to 660 (LRRDDEDWKP) are compositionally biased toward basic and acidic residues. The segment at 672-788 (LDETFWVLGS…NVATHYHYNA (117 aa)) is interaction with host EIF2AK2/PKR.

This sequence belongs to the herpesviridae US22 family. In terms of assembly, interacts with host EIF2AK2/PKR; this interaction retains EIF2AK2 to the host nucleus and prevents its activation. Interaction (via N-terminus) with host BECN1; this interaction inhibits host autophagy. Interacts with the viral DNA polymerase accessory subunit UL44. Interacts with host HSPA5.

The protein resides in the virion. The protein localises to the host cytoplasm. It is found in the host nucleus. Inhibits the establishment of the antiviral state in the infected cell. Prevents the phosphorylation of the host eukaryotic translation initiation factor eIF-2alpha/EIF2S1 and thus the shutoff of viral and cellular protein synthesis by directly interacting with EIF2AK2/PKR. Prevents stress granule formation in response to eIF-2alpha/EIF2S1 phosphorylation, thereby rescuing viral replication and protein synthesis. Also inhibits host autophagy by interacting with host Beclin-1/BECN1. The polypeptide is Protein TRS1 (TRS1) (Human cytomegalovirus (strain Merlin) (HHV-5)).